The sequence spans 262 residues: MKKIEYKHTEIAVKKKLGQNFLTDQNICRKIVESAQLQENDHVLEIGPGFGALTTAILEVVPRFTAVEKDRILAEFIRNEYPSVRVIEMDFLKIDLEELASEGRLRIMGNIPYSITTPILFKLLDNRRNIFSETLMMQHEVARRLVASPGSKEYGILAVQLQTFCDVTYLFKVNRTVFKPRPEVDSAVVSIIPKTAIFDADETGFRNFVRTSFGQRRKTLHNNLKKYYDLSMVTSIDLKLRAESLSVEQFLTLFKELRPLPD.

6 residues coordinate S-adenosyl-L-methionine: Asn-20, Leu-22, Gly-47, Glu-68, Asp-90, and Asn-110.

Belongs to the class I-like SAM-binding methyltransferase superfamily. rRNA adenine N(6)-methyltransferase family. RsmA subfamily.

Its subcellular location is the cytoplasm. The catalysed reaction is adenosine(1518)/adenosine(1519) in 16S rRNA + 4 S-adenosyl-L-methionine = N(6)-dimethyladenosine(1518)/N(6)-dimethyladenosine(1519) in 16S rRNA + 4 S-adenosyl-L-homocysteine + 4 H(+). Its function is as follows. Specifically dimethylates two adjacent adenosines (A1518 and A1519) in the loop of a conserved hairpin near the 3'-end of 16S rRNA in the 30S particle. May play a critical role in biogenesis of 30S subunits. This Chlorobium phaeobacteroides (strain BS1) protein is Ribosomal RNA small subunit methyltransferase A.